The chain runs to 529 residues: Apolipoprotein N-acyltransferase (529 aa).

5 consecutive transmembrane segments (helical) span residues 8 to 28 (VMLA…AVGA), 66 to 86 (ILPA…AGLW), 105 to 125 (LAIL…VAAA), 178 to 198 (LLGL…PALI), and 203 to 223 (GMGP…GYGF). The CN hydrolase domain occupies 242-491 (VQPAIDQSRK…VGILDATLSG (250 aa)). The active-site Proton acceptor is glutamate 286. Lysine 350 is an active-site residue. Cysteine 403 (nucleophile) is an active-site residue. Residues 505 to 525 (YFWLIFSILMIVAVFPALSFA) form a helical membrane-spanning segment.

This sequence belongs to the CN hydrolase family. Apolipoprotein N-acyltransferase subfamily.

It is found in the cell inner membrane. The catalysed reaction is N-terminal S-1,2-diacyl-sn-glyceryl-L-cysteinyl-[lipoprotein] + a glycerophospholipid = N-acyl-S-1,2-diacyl-sn-glyceryl-L-cysteinyl-[lipoprotein] + a 2-acyl-sn-glycero-3-phospholipid + H(+). The protein operates within protein modification; lipoprotein biosynthesis (N-acyl transfer). Functionally, catalyzes the phospholipid dependent N-acylation of the N-terminal cysteine of apolipoprotein, the last step in lipoprotein maturation. The chain is Apolipoprotein N-acyltransferase from Agrobacterium fabrum (strain C58 / ATCC 33970) (Agrobacterium tumefaciens (strain C58)).